Here is a 198-residue protein sequence, read N- to C-terminus: Glycerol-3-phosphate acyltransferase (198 aa).

The next 5 helical transmembrane spans lie at 5-25 (LILL…LWIG), 56-76 (SIVT…PFFF), 84-104 (FWLL…FAGF), 114-134 (AGVI…VFLV), and 158-178 (LFMG…FVIW).

Belongs to the PlsY family. As to quaternary structure, probably interacts with PlsX.

The protein localises to the cell membrane. The enzyme catalyses an acyl phosphate + sn-glycerol 3-phosphate = a 1-acyl-sn-glycero-3-phosphate + phosphate. Its pathway is lipid metabolism; phospholipid metabolism. Catalyzes the transfer of an acyl group from acyl-phosphate (acyl-PO(4)) to glycerol-3-phosphate (G3P) to form lysophosphatidic acid (LPA). This enzyme utilizes acyl-phosphate as fatty acyl donor, but not acyl-CoA or acyl-ACP. The chain is Glycerol-3-phosphate acyltransferase from Listeria monocytogenes serovar 1/2a (strain ATCC BAA-679 / EGD-e).